A 301-amino-acid polypeptide reads, in one-letter code: Lycopene elongase/hydratase (301 aa).

The disordered stretch occupies residues 1 to 20 (MSADMAAQSESGEGGDDGRA). Helical transmembrane passes span 39–59 (FWLY…SALA), 61–81 (LFGL…NVFL), 110–130 (PVNT…FAVA), 133–153 (VAWP…APPF), 160–180 (LLDS…YAAV), 186–206 (PMLA…FSAI), 229–249 (TYWY…AVDL), 252–272 (GALL…GVDV), and 276–296 (YWWY…GALW).

Belongs to the UbiA prenyltransferase family.

It is found in the cell membrane. It carries out the reaction all-trans-lycopene + dimethylallyl diphosphate + H2O = dihydroisopentenyldehydrorhodopin + diphosphate. It catalyses the reaction isopentenyldehydrorhodopin + dimethylallyl diphosphate + H2O = dihydrobisanhydrobacterioruberin + diphosphate. It participates in carotenoid biosynthesis. Involved in the biosynthesis of the acyclic C50 carotenoid bacterioruberin (BR). Acts as a bifunctional elongase/hydratase that catalyzes the elongation of lycopene by attaching a C(5) isoprene unit at C-2, as well as the hydroxylation of the previous end of the molecule. The enzyme acts at both ends of the substrate, and catalyzes the conversion of lycopene to the C(45) intermediate dihydroisopentenyldehydrorhodopin (DH-IDR) and the conversion of isopentenyldehydrorhodopin (IDR) to the C(50) carotenoid dihydrobisanhydrobacterioruberin (DH-BABR). Can also catalyze the conversion of lycopene to tetrahydrobisanhydrobacterioruberin (TH-BABR). The protein is Lycopene elongase/hydratase of Haloferax volcanii (strain ATCC 29605 / DSM 3757 / JCM 8879 / NBRC 14742 / NCIMB 2012 / VKM B-1768 / DS2) (Halobacterium volcanii).